An 89-amino-acid polypeptide reads, in one-letter code: DNA-directed RNA polymerase subunit omega (89 aa).

The protein belongs to the RNA polymerase subunit omega family. In terms of assembly, the RNAP catalytic core consists of 2 alpha, 1 beta, 1 beta' and 1 omega subunit. When a sigma factor is associated with the core the holoenzyme is formed, which can initiate transcription.

It carries out the reaction RNA(n) + a ribonucleoside 5'-triphosphate = RNA(n+1) + diphosphate. Promotes RNA polymerase assembly. Latches the N- and C-terminal regions of the beta' subunit thereby facilitating its interaction with the beta and alpha subunits. The sequence is that of DNA-directed RNA polymerase subunit omega (rpoZ) from Pasteurella multocida (strain Pm70).